The chain runs to 104 residues: Probable head completion protein 1 (104 aa).

It belongs to the skunalikevirus head completion protein 1 family.

The protein localises to the virion. In terms of biological role, probable head completion protein that exhibits an open central channel for viral DNA ejection. Part of the head-tail connector by binding to the portal protein and to the head completion protein 2. Plays a role in morphogenesis of the virion capsid after genome packaging. The polypeptide is Probable head completion protein 1 (Lactococcus lactis (Lactococcus lactis bacteriophage p2)).